Here is a 443-residue protein sequence, read N- to C-terminus: UDP-N-acetylmuramate--L-alanine ligase (443 aa).

Residue 111-117 coordinates ATP; sequence GAHGKTS.

Belongs to the MurCDEF family.

The protein resides in the cytoplasm. It catalyses the reaction UDP-N-acetyl-alpha-D-muramate + L-alanine + ATP = UDP-N-acetyl-alpha-D-muramoyl-L-alanine + ADP + phosphate + H(+). Its pathway is cell wall biogenesis; peptidoglycan biosynthesis. Its function is as follows. Cell wall formation. This is UDP-N-acetylmuramate--L-alanine ligase from Levilactobacillus brevis (strain ATCC 367 / BCRC 12310 / CIP 105137 / JCM 1170 / LMG 11437 / NCIMB 947 / NCTC 947) (Lactobacillus brevis).